The primary structure comprises 123 residues: Small ribosomal subunit protein uS12 (123 aa).

Aspartate 89 carries the 3-methylthioaspartic acid modification.

The protein belongs to the universal ribosomal protein uS12 family. In terms of assembly, part of the 30S ribosomal subunit. Contacts proteins S8 and S17. May interact with IF1 in the 30S initiation complex.

Its function is as follows. With S4 and S5 plays an important role in translational accuracy. Functionally, interacts with and stabilizes bases of the 16S rRNA that are involved in tRNA selection in the A site and with the mRNA backbone. Located at the interface of the 30S and 50S subunits, it traverses the body of the 30S subunit contacting proteins on the other side and probably holding the rRNA structure together. The combined cluster of proteins S8, S12 and S17 appears to hold together the shoulder and platform of the 30S subunit. This is Small ribosomal subunit protein uS12 from Nitrobacter winogradskyi (strain ATCC 25391 / DSM 10237 / CIP 104748 / NCIMB 11846 / Nb-255).